Here is a 528-residue protein sequence, read N- to C-terminus: Glycerol kinase 5 (528 aa).

ATP-binding residues include serine 28 and serine 29. Residues arginine 98, aspartate 275, and glutamine 276 each contribute to the glycerol site. ATP contacts are provided by threonine 297, glycine 340, and glycine 440.

It belongs to the FGGY kinase family.

It is found in the cytoplasm. It carries out the reaction glycerol + ATP = sn-glycerol 3-phosphate + ADP + H(+). The protein operates within polyol metabolism; glycerol degradation via glycerol kinase pathway; sn-glycerol 3-phosphate from glycerol: step 1/1. Its function is as follows. Skin-specific kinase that plays a key role in glycerol metabolism, catalyzing its phosphorylation to produce sn-glycerol 3-phosphate. Involved in skin-specific regulation of sterol regulatory element-binding protein (SREBP) processing and lipid biosynthesis. This Bos taurus (Bovine) protein is Glycerol kinase 5 (GK5).